A 317-amino-acid chain; its full sequence is Ricin B-like lectin EULS3 (317 aa).

Basic residues predominate over residues 1–11 (MEHHHQHHRHH). The interval 1 to 157 (MEHHHQHHRH…YHKPDENRLP (157 aa)) is disordered. Pro residues predominate over residues 25 to 36 (VPPPHVDAPPQP). A compositionally biased stretch (polar residues) spans 136–146 (HSSNQPQSSSG). A Ricin B-type lectin domain is found at 168 to 315 (TVKVYSKAEP…KGDNQLWKIF (148 aa)).

Interacts (via N-terminus) with ATS3A and ATS3B. In terms of tissue distribution, expressed in roots, rosette leaves, stems, cauline leaves and flowers.

The protein resides in the nucleus. The protein localises to the cytoplasm. In terms of biological role, lectin which binds carbohydrates in vitro. Interacts through its lectin domain with glycan structures containing one or more Lewis X, Lewis Y or lactosamine motifs. May play a role in abiotic stress responses. May play a role in abscisic acid-induced stomatal closure. May play a role in disease resistance against Pseudomonas syringae through its involvement in stomatal movement. In Arabidopsis thaliana (Mouse-ear cress), this protein is Ricin B-like lectin EULS3.